Reading from the N-terminus, the 380-residue chain is Cytochrome b (380 aa).

4 helical membrane-spanning segments follow: residues 33 to 53 (FGSL…FLAM), 77 to 98 (WLIR…YMHI), 113 to 133 (WNIG…GYVL), and 178 to 198 (FFAF…LHLL). Residues His83 and His97 each coordinate heme b. Positions 182 and 196 each coordinate heme b. A ubiquinone is bound at residue His201. 4 helical membrane passes run 226-246 (YKDL…ALFA), 288-308 (LGGV…PILH), 320-340 (LTQF…WIGG), and 347-367 (FIII…VLAP).

This sequence belongs to the cytochrome b family. In terms of assembly, the cytochrome bc1 complex contains 3 respiratory subunits (MT-CYB, CYC1 and UQCRFS1), 2 core proteins (UQCRC1 and UQCRC2) and probably 6 low-molecular weight proteins. Heme b serves as cofactor.

The protein localises to the mitochondrion inner membrane. Functionally, component of the ubiquinol-cytochrome c reductase complex (complex III or cytochrome b-c1 complex) that is part of the mitochondrial respiratory chain. The b-c1 complex mediates electron transfer from ubiquinol to cytochrome c. Contributes to the generation of a proton gradient across the mitochondrial membrane that is then used for ATP synthesis. This Salmo trutta (Brown trout) protein is Cytochrome b (mt-cyb).